The primary structure comprises 87 residues: Ribonuclease P protein component 1 (87 aa).

It belongs to the eukaryotic/archaeal RNase P protein component 1 family. As to quaternary structure, consists of a catalytic RNA component and at least 4-5 protein subunits.

The protein localises to the cytoplasm. The enzyme catalyses Endonucleolytic cleavage of RNA, removing 5'-extranucleotides from tRNA precursor.. Its function is as follows. Part of ribonuclease P, a protein complex that generates mature tRNA molecules by cleaving their 5'-ends. This Thermoplasma acidophilum (strain ATCC 25905 / DSM 1728 / JCM 9062 / NBRC 15155 / AMRC-C165) protein is Ribonuclease P protein component 1.